A 140-amino-acid polypeptide reads, in one-letter code: Nucleoside diphosphate kinase (140 aa).

6 residues coordinate ATP: lysine 11, phenylalanine 59, arginine 87, threonine 93, arginine 104, and asparagine 114. Residue histidine 117 is the Pros-phosphohistidine intermediate of the active site.

Belongs to the NDK family. Homotetramer. It depends on Mg(2+) as a cofactor.

The protein resides in the cytoplasm. It carries out the reaction a 2'-deoxyribonucleoside 5'-diphosphate + ATP = a 2'-deoxyribonucleoside 5'-triphosphate + ADP. The catalysed reaction is a ribonucleoside 5'-diphosphate + ATP = a ribonucleoside 5'-triphosphate + ADP. Its function is as follows. Major role in the synthesis of nucleoside triphosphates other than ATP. The ATP gamma phosphate is transferred to the NDP beta phosphate via a ping-pong mechanism, using a phosphorylated active-site intermediate. This Rickettsia peacockii (strain Rustic) protein is Nucleoside diphosphate kinase.